Here is a 398-residue protein sequence, read N- to C-terminus: DNA replication and repair protein RecF (398 aa).

30 to 37 (GSNGLGKT) is a binding site for ATP.

It belongs to the RecF family.

It is found in the cytoplasm. The RecF protein is involved in DNA metabolism; it is required for DNA replication and normal SOS inducibility. RecF binds preferentially to single-stranded, linear DNA. It also seems to bind ATP. The sequence is that of DNA replication and repair protein RecF from Renibacterium salmoninarum (strain ATCC 33209 / DSM 20767 / JCM 11484 / NBRC 15589 / NCIMB 2235).